Reading from the N-terminus, the 486-residue chain is ATP synthase subunit beta (486 aa).

Position 170–177 (170–177 (GGAGVGKT)) interacts with ATP.

Belongs to the ATPase alpha/beta chains family. In terms of assembly, F-type ATPases have 2 components, CF(1) - the catalytic core - and CF(0) - the membrane proton channel. CF(1) has five subunits: alpha(3), beta(3), gamma(1), delta(1), epsilon(1). CF(0) has three main subunits: a(1), b(2) and c(9-12). The alpha and beta chains form an alternating ring which encloses part of the gamma chain. CF(1) is attached to CF(0) by a central stalk formed by the gamma and epsilon chains, while a peripheral stalk is formed by the delta and b chains.

Its subcellular location is the cell membrane. The enzyme catalyses ATP + H2O + 4 H(+)(in) = ADP + phosphate + 5 H(+)(out). Its function is as follows. Produces ATP from ADP in the presence of a proton gradient across the membrane. The catalytic sites are hosted primarily by the beta subunits. This chain is ATP synthase subunit beta, found in Clavibacter michiganensis subsp. michiganensis (strain NCPPB 382).